The primary structure comprises 147 residues: TRAF-interacting protein with FHA domain-containing protein B (147 aa).

The FHA domain occupies Leu-36–Ser-108.

As to quaternary structure, interacts with TIFA.

Functionally, inhibits TIFA-mediated TRAF6 activation possibly by inducing a conformational change in TIFA. In Rattus norvegicus (Rat), this protein is TRAF-interacting protein with FHA domain-containing protein B.